Here is a 205-residue protein sequence, read N- to C-terminus: Holliday junction branch migration complex subunit RuvA (205 aa).

The domain I stretch occupies residues Met-1–Ile-64. The tract at residues Thr-65–Glu-143 is domain II. Residues Arg-144–Ala-156 form a flexible linker region. The segment at Ala-157–Leu-205 is domain III.

This sequence belongs to the RuvA family. In terms of assembly, homotetramer. Forms an RuvA(8)-RuvB(12)-Holliday junction (HJ) complex. HJ DNA is sandwiched between 2 RuvA tetramers; dsDNA enters through RuvA and exits via RuvB. An RuvB hexamer assembles on each DNA strand where it exits the tetramer. Each RuvB hexamer is contacted by two RuvA subunits (via domain III) on 2 adjacent RuvB subunits; this complex drives branch migration. In the full resolvosome a probable DNA-RuvA(4)-RuvB(12)-RuvC(2) complex forms which resolves the HJ.

It is found in the cytoplasm. Functionally, the RuvA-RuvB-RuvC complex processes Holliday junction (HJ) DNA during genetic recombination and DNA repair, while the RuvA-RuvB complex plays an important role in the rescue of blocked DNA replication forks via replication fork reversal (RFR). RuvA specifically binds to HJ cruciform DNA, conferring on it an open structure. The RuvB hexamer acts as an ATP-dependent pump, pulling dsDNA into and through the RuvAB complex. HJ branch migration allows RuvC to scan DNA until it finds its consensus sequence, where it cleaves and resolves the cruciform DNA. The polypeptide is Holliday junction branch migration complex subunit RuvA (Shewanella frigidimarina (strain NCIMB 400)).